A 931-amino-acid chain; its full sequence is Isoleucine--tRNA ligase (931 aa).

The 'HIGH' region signature appears at 57–67 (PFANGNIHMGH). Glutamate 556 contacts L-isoleucyl-5'-AMP. Positions 597-601 (KMSKS) match the 'KMSKS' region motif. Lysine 600 contacts ATP. Zn(2+) contacts are provided by cysteine 890, cysteine 893, cysteine 910, and cysteine 913.

Belongs to the class-I aminoacyl-tRNA synthetase family. IleS type 1 subfamily. In terms of assembly, monomer. It depends on Zn(2+) as a cofactor.

It is found in the cytoplasm. The catalysed reaction is tRNA(Ile) + L-isoleucine + ATP = L-isoleucyl-tRNA(Ile) + AMP + diphosphate. Catalyzes the attachment of isoleucine to tRNA(Ile). As IleRS can inadvertently accommodate and process structurally similar amino acids such as valine, to avoid such errors it has two additional distinct tRNA(Ile)-dependent editing activities. One activity is designated as 'pretransfer' editing and involves the hydrolysis of activated Val-AMP. The other activity is designated 'posttransfer' editing and involves deacylation of mischarged Val-tRNA(Ile). In Lactobacillus delbrueckii subsp. bulgaricus (strain ATCC 11842 / DSM 20081 / BCRC 10696 / JCM 1002 / NBRC 13953 / NCIMB 11778 / NCTC 12712 / WDCM 00102 / Lb 14), this protein is Isoleucine--tRNA ligase.